The chain runs to 173 residues: 6,7-dimethyl-8-ribityllumazine synthase (173 aa).

Residues tyrosine 34, 65–67 (ALE), and 94–96 (CVI) each bind 5-amino-6-(D-ribitylamino)uracil. (2S)-2-hydroxy-3-oxobutyl phosphate is bound at residue 99-100 (ET). The active-site Proton donor is histidine 102. A 5-amino-6-(D-ribitylamino)uracil-binding site is contributed by asparagine 127. Arginine 141 contributes to the (2S)-2-hydroxy-3-oxobutyl phosphate binding site.

Belongs to the DMRL synthase family.

The enzyme catalyses (2S)-2-hydroxy-3-oxobutyl phosphate + 5-amino-6-(D-ribitylamino)uracil = 6,7-dimethyl-8-(1-D-ribityl)lumazine + phosphate + 2 H2O + H(+). It functions in the pathway cofactor biosynthesis; riboflavin biosynthesis; riboflavin from 2-hydroxy-3-oxobutyl phosphate and 5-amino-6-(D-ribitylamino)uracil: step 1/2. In terms of biological role, catalyzes the formation of 6,7-dimethyl-8-ribityllumazine by condensation of 5-amino-6-(D-ribitylamino)uracil with 3,4-dihydroxy-2-butanone 4-phosphate. This is the penultimate step in the biosynthesis of riboflavin. The chain is 6,7-dimethyl-8-ribityllumazine synthase from Methylorubrum extorquens (strain CM4 / NCIMB 13688) (Methylobacterium extorquens).